A 472-amino-acid polypeptide reads, in one-letter code: Ras-GEF domain-containing family member 1B (472 aa).

Positions 34 to 164 (HDNNLLSGSL…MMQCLIRKLA (131 aa)) constitute an N-terminal Ras-GEF domain. One can recognise a Ras-GEF domain in the interval 204–452 (DPYTLAQQLT…YLASYESEGP (249 aa)).

Interacts with CCDC124 during cytokinesis. Interacts with Ras family proteins.

The protein resides in the early endosome. Its subcellular location is the late endosome. It is found in the midbody. In terms of biological role, guanine nucleotide exchange factor (GEF) with specificity for RAP2A, it doesn't seems to activate other Ras family proteins (in vitro). In Pongo abelii (Sumatran orangutan), this protein is Ras-GEF domain-containing family member 1B (RASGEF1B).